Consider the following 58-residue polypeptide: Birtoxin (58 aa).

One can recognise an LCN-type CS-alpha/beta domain in the interval 3–58 (VPGNYPLDKDGNTYKCFLLGGNEECLNVCKLHGVQYGYCYASKCWCEYLEDDKDSV). 3 cysteine pairs are disulfide-bonded: C18–C41, C27–C46, and C31–C48.

As to expression, expressed by the venom gland.

Its subcellular location is the secreted. Beta toxins bind voltage-independently at site-4 of sodium channels (Nav) and shift the voltage of activation toward more negative potentials thereby affecting sodium channel activation and promoting spontaneous and repetitive firing. Moderately toxic, but very high abundant. Does not target reptilian channels. Does not produce effect when administered to blowfly and cabbage looper larvae. In mice, produces convulsions, tremors, increased ventilation and, subsequently, death. The chain is Birtoxin from Parabuthus transvaalicus (Transvaal thick-tailed scorpion).